We begin with the raw amino-acid sequence, 336 residues long: Fructose-1,6-bisphosphatase class 1 (336 aa).

Positions 90, 112, 114, and 115 each coordinate Mg(2+). Substrate contacts are provided by residues 115–118 (DGSS), N211, and K277. E283 contributes to the Mg(2+) binding site.

This sequence belongs to the FBPase class 1 family. As to quaternary structure, homotetramer. Mg(2+) serves as cofactor.

The protein resides in the cytoplasm. It catalyses the reaction beta-D-fructose 1,6-bisphosphate + H2O = beta-D-fructose 6-phosphate + phosphate. Its pathway is carbohydrate biosynthesis; gluconeogenesis. The protein is Fructose-1,6-bisphosphatase class 1 of Pseudomonas putida (strain ATCC 700007 / DSM 6899 / JCM 31910 / BCRC 17059 / LMG 24140 / F1).